The following is a 314-amino-acid chain: NAC domain-containing protein 10 (314 aa).

The segment covering 18–39 (VSNTDHPSVQLKDQSQSCVTSR) has biased composition (polar residues). Disordered stretches follow at residues 18-48 (VSNT…SAET) and 150-182 (YTTG…PVLS). An NAC domain is found at 77 to 236 (LPAGVKFDPS…EPVLSKVFYQ (160 aa)). Positions 160-171 (VSTDEEGHETRW) are enriched in basic and acidic residues. Residues 187 to 242 (TGFKKILVLYTNYGRQKKPEKTNWVMHQYHLGSSEDEKDGEPVLSKVFYQTQPRQC) mediate DNA binding.

Expressed in protoxylem and elongating interfascicular fiber cells of elongating internodes, developing metaxylem cells and interfascicular fibers of non-elongating internodes and developing secondary xylem of roots.

It localises to the nucleus. Its function is as follows. Transcriptional activator that plays a regulatory role in the development of secondary cell wall fibers. Is a direct target of SND1. In Arabidopsis thaliana (Mouse-ear cress), this protein is NAC domain-containing protein 10.